The sequence spans 400 residues: Double C2-like domain-containing protein alpha (400 aa).

The interaction with UNC13D and DYNLT1 stretch occupies residues 1–89 (MRGRRGDRMT…DSYDSDDATA (89 aa)). 2 consecutive C2 domains span residues 89–211 (ALGT…HFNI) and 251–384 (ERGR…ERWH). Positions 120, 126, 181, 183, 282, 288, 342, 344, and 350 each coordinate Ca(2+). An interaction with UNC13D region spans residues 215–400 (RQVPLASPSS…PPAAGALSSA (186 aa)).

Interacts (via N-terminus) with UNC13A. Interacts with cytoplasmic dynein light chain DYNLT1. Interacts with UNC13D. Ca(2+) serves as cofactor. Predominantly expressed in brain. Also expressed in testis.

It localises to the lysosome. The protein localises to the cytoplasmic vesicle. The protein resides in the secretory vesicle. It is found in the synaptic vesicle membrane. Its subcellular location is the synapse. It localises to the synaptosome. Its function is as follows. Calcium sensor which most probably regulates fusion of vesicles with membranes. Binds calcium and phospholipids. May be involved in calcium dependent neurotransmitter release through the interaction with UNC13A. May be involved in calcium-dependent spontaneous release of neurotransmitter in absence of action potentials in neuronal cells. Regulates Ca(2+)-dependent secretory lysosome exocytosis in mast cells. The sequence is that of Double C2-like domain-containing protein alpha (DOC2A) from Homo sapiens (Human).